Consider the following 27-residue polypeptide: Caerulein precursor fragment R8 (27 aa).

In terms of tissue distribution, expressed by the skin glands.

It localises to the secreted. Functionally, antimicrobial peptide. This chain is Caerulein precursor fragment R8, found in Xenopus ruwenzoriensis (Uganda clawed frog).